Here is a 159-residue protein sequence, read N- to C-terminus: Cyclic pyranopterin monophosphate synthase (159 aa).

Substrate contacts are provided by residues 75–77 (LCH) and 113–114 (ME). Aspartate 128 is an active-site residue.

The protein belongs to the MoaC family. In terms of assembly, homohexamer; trimer of dimers.

The enzyme catalyses (8S)-3',8-cyclo-7,8-dihydroguanosine 5'-triphosphate = cyclic pyranopterin phosphate + diphosphate. It participates in cofactor biosynthesis; molybdopterin biosynthesis. Functionally, catalyzes the conversion of (8S)-3',8-cyclo-7,8-dihydroguanosine 5'-triphosphate to cyclic pyranopterin monophosphate (cPMP). This Cupriavidus metallidurans (strain ATCC 43123 / DSM 2839 / NBRC 102507 / CH34) (Ralstonia metallidurans) protein is Cyclic pyranopterin monophosphate synthase.